Here is a 170-residue protein sequence, read N- to C-terminus: Bifunctional protein PyrR (170 aa).

Residues 90-102 (LVLIDDVLMSGRT) carry the PRPP-binding motif.

The protein belongs to the purine/pyrimidine phosphoribosyltransferase family. PyrR subfamily.

It catalyses the reaction UMP + diphosphate = 5-phospho-alpha-D-ribose 1-diphosphate + uracil. Functionally, regulates the transcription of the pyrimidine nucleotide (pyr) operon in response to exogenous pyrimidines. Also displays a weak uracil phosphoribosyltransferase activity which is not physiologically significant. The protein is Bifunctional protein PyrR of Pseudomonas syringae pv. syringae (strain B728a).